The following is a 1076-amino-acid chain: MTEQRKSLIKLISAVIIILLLPVLFFRFIGDDPTKKAVNSTRQIAVVNEDTGVLSDEVKSDEEDKSAQFGKEVAAVLGERPDYSWTVVNRSAAETGLASKKYDAIVYIPSDFSKNILSYDKDHPQKATLEFSIQDNLNAVNKEKVQRELEDAQKTMNKKMSALYWNFVSQKVDNIRGEFDKIVNKESEFQNVMYNFYKPSSNDLAGEIKQQKDLIDELKKSMNEAQGTTKEKASTAEEAKNTLKEFIDTVERYKEYQENQKKLLLAAQDSTQQQIRTGLDAIQAQQKANQFSERMSGLATGIGQAKTQIGLTNLALNNAEKLRQNQVPLQEMGMKKIENDMFNAFLSRYKSQYEAIKYQNLNQLQENIGKNRLSLLKPKESDEKEDGEDTSDNKDDTDKEDIEDIKLDLEKQRDELKNVATEIKDISEGLKEPEQEKPTTPDAEEPSTDDSPNTEEPSNDIPTSDDQPTNEDTGSSEEGTQDNGSQNDVQTNIETGQKHQESSKNVPEQDTNTENTGTSKTDFSLIELADENDGSNQSDGLQGDGADGETDISGAKKRLNEAAIKLEEIENALQEKQEEHNNKLEKHIDELNQEIKELNKTVSKLNDQIGDLTKKLVDFDNNVNDAYRLIYNLEDEIIQTLQSRGYIDQKEKLSSIFSSRIETDNISNLMKYYNSLNLYKSTLNDNLDLGSLTIIKGEVIQEQDGNVQSVLALTPEESASWEALKNNTMQTDEDINSFIDGMTKFADDYSGYIRDSQAGVLDELTKISESAAKASEQLVTGATQESATFSNDGLSGTMALSVQDTVGQEVLQMSDMMGSLSDRQSGIIDYTTNMQQSVNDVQAKADTLNNNWGKNVASTKLVRNDVYGILGNTLVDGQNNGYVYDYLANPLKISGEVPEEKIQTVPPVVILVIVLISSLLIGYFSSYYQNAPLLVKGALFGILNILVGLMISLFGLNIYSLPDDQTIKWSVFTILLLVASSAFIRTAFRFGSIPGWVASAAMILFYVAPLIDLIMPNFTFEDPVSKVYIDIQYGTGHLFTMGITVLLIITVIAVALPLIIRLMAEHTAESDETYEA.

The chain crosses the membrane as a helical span at residues 9–29 (IKLISAVIIILLLPVLFFRFI). 2 disordered regions span residues 372-404 (RLSLLKPKESDEKEDGEDTSDNKDDTDKEDIED) and 423-552 (IKDI…ETDI). A compositionally biased stretch (basic and acidic residues) spans 423 to 439 (IKDISEGLKEPEQEKPT). 2 stretches are compositionally biased toward polar residues: residues 449 to 495 (DDSP…NIET) and 503 to 522 (SKNVPEQDTNTENTGTSKTD). Positions 552–622 (ISGAKKRLNE…TKKLVDFDNN (71 aa)) form a coiled coil. 5 helical membrane-spanning segments follow: residues 904–924 (TVPPVVILVIVLISSLLIGYF), 938–958 (ALFGILNILVGLMISLFGLNI), 964–984 (DQTIKWSVFTILLLVASSAFI), 995–1015 (GWVASAAMILFYVAPLIDLIM), and 1040–1060 (TMGITVLLIITVIAVALPLII).

This sequence belongs to the EsaA family.

It is found in the cell membrane. Functionally, required for YukE secretion. Probable component or regulator of the ESX/ESAT-6-like secretion system (BsEss). Bacteriophage SPP1 receptor. Essential for the irreversible adsorption of the bacteriophage. The chain is ESX secretion system protein YueB (yueB) from Bacillus subtilis (strain 168).